We begin with the raw amino-acid sequence, 193 residues long: Xanthine phosphoribosyltransferase (193 aa).

Residues Leu-20 and Asn-27 each coordinate xanthine. 128–132 (ANGEA) contacts 5-phospho-alpha-D-ribose 1-diphosphate. Lys-156 serves as a coordination point for xanthine.

The protein belongs to the purine/pyrimidine phosphoribosyltransferase family. Xpt subfamily. Homodimer.

It is found in the cytoplasm. It catalyses the reaction XMP + diphosphate = xanthine + 5-phospho-alpha-D-ribose 1-diphosphate. The protein operates within purine metabolism; XMP biosynthesis via salvage pathway; XMP from xanthine: step 1/1. Its function is as follows. Converts the preformed base xanthine, a product of nucleic acid breakdown, to xanthosine 5'-monophosphate (XMP), so it can be reused for RNA or DNA synthesis. This is Xanthine phosphoribosyltransferase from Exiguobacterium sp. (strain ATCC BAA-1283 / AT1b).